The primary structure comprises 314 residues: 4-diphosphocytidyl-2-C-methyl-D-erythritol kinase (314 aa).

Lysine 11 is a catalytic residue. Position 99–109 (99–109 (PMAAGLAGGST)) interacts with ATP. Aspartate 141 is an active-site residue.

Belongs to the GHMP kinase family. IspE subfamily.

It catalyses the reaction 4-CDP-2-C-methyl-D-erythritol + ATP = 4-CDP-2-C-methyl-D-erythritol 2-phosphate + ADP + H(+). It functions in the pathway isoprenoid biosynthesis; isopentenyl diphosphate biosynthesis via DXP pathway; isopentenyl diphosphate from 1-deoxy-D-xylulose 5-phosphate: step 3/6. Functionally, catalyzes the phosphorylation of the position 2 hydroxy group of 4-diphosphocytidyl-2C-methyl-D-erythritol. In Trichodesmium erythraeum (strain IMS101), this protein is 4-diphosphocytidyl-2-C-methyl-D-erythritol kinase.